Consider the following 1170-residue polypeptide: Type I restriction enzyme EcoKI endonuclease subunit (1170 aa).

Residues 143 to 229 adopt a coiled-coil conformation; that stretch reads YHQEVLTLKQ…QERKAYHKEI (87 aa). Positions 431–450 form a DNA-binding region, H-T-H motif; that stretch reads NQWFADNPGMSELGLRYYQE. The Helicase ATP-binding domain occupies 458–639; sequence KAIVKGQQEI…GEPVYRYTYR (182 aa). 472–478 provides a ligand contact to ATP; that stretch reads ATGTGKT. The DEAH box motif lies at 574-577; it reads DEAH. One can recognise a Helicase C-terminal domain in the interval 714-879; it reads ELTNYLDPTG…TLVNEITDSE (166 aa).

It belongs to the HsdR family. As to quaternary structure, the type I restriction/modification system is composed of three polypeptides R, M and S. The restriction enzyme has stoichiometry R(2)M(2)S(1). The methyltransferase is composed of M(2)S(1). (Microbial infection) Interacts with Escherichia phage T7 protein Ocr; this interaction leads to the inhibition of the type I bifunctional endonuclease and methyltransferase restriction enzyme R.EcoKI composed of R(2)M(2)S(1). Post-translationally, upon purification after overexpression about one-third has the initiating methionine removed.

It catalyses the reaction Endonucleolytic cleavage of DNA to give random double-stranded fragments with terminal 5'-phosphates, ATP is simultaneously hydrolyzed.. In terms of biological role, the subtype A restriction (R) subunit of a type I restriction enzyme that recognizes 5'-AACN(6)GTGC-3' and cleaves a random distance away. The R subunit is required for both endonuclease and ATPase activities but not for modification. Has endonucleolytic activity that requires Mg(2+), ATP and S-adenosyl-L-methionine (SAM); ATP can be replaced by dATP, no tested molecule could substitute for SAM. Generates double-stranded DNA with no nicks, by cutting one strand then the other within a few seconds. Cleaves only non-methylated DNA, hemi-methylated and fully methylated DNA are not substrates. After locating a non-methylated recognition site, the enzyme complex serves as a molecular motor that translocates DNA in an ATP-dependent manner until a collision occurs that triggers cleavage. The protein is Type I restriction enzyme EcoKI endonuclease subunit of Escherichia coli (strain K12).